The chain runs to 274 residues: 2,3,4,5-tetrahydropyridine-2,6-dicarboxylate N-succinyltransferase (274 aa).

Positions 104 and 141 each coordinate substrate.

Belongs to the transferase hexapeptide repeat family. As to quaternary structure, homotrimer.

It is found in the cytoplasm. The enzyme catalyses (S)-2,3,4,5-tetrahydrodipicolinate + succinyl-CoA + H2O = (S)-2-succinylamino-6-oxoheptanedioate + CoA. It functions in the pathway amino-acid biosynthesis; L-lysine biosynthesis via DAP pathway; LL-2,6-diaminopimelate from (S)-tetrahydrodipicolinate (succinylase route): step 1/3. The sequence is that of 2,3,4,5-tetrahydropyridine-2,6-dicarboxylate N-succinyltransferase from Shewanella pealeana (strain ATCC 700345 / ANG-SQ1).